A 318-amino-acid polypeptide reads, in one-letter code: tRNA-cytidine(32) 2-sulfurtransferase (318 aa).

The PP-loop motif signature appears at 52–57 (SGGKDS). Residues Cys127, Cys130, and Cys218 each contribute to the [4Fe-4S] cluster site.

It belongs to the TtcA family. Homodimer. Requires Mg(2+) as cofactor. It depends on [4Fe-4S] cluster as a cofactor.

It is found in the cytoplasm. It carries out the reaction cytidine(32) in tRNA + S-sulfanyl-L-cysteinyl-[cysteine desulfurase] + AH2 + ATP = 2-thiocytidine(32) in tRNA + L-cysteinyl-[cysteine desulfurase] + A + AMP + diphosphate + H(+). The protein operates within tRNA modification. Its function is as follows. Catalyzes the ATP-dependent 2-thiolation of cytidine in position 32 of tRNA, to form 2-thiocytidine (s(2)C32). The sulfur atoms are provided by the cysteine/cysteine desulfurase (IscS) system. The chain is tRNA-cytidine(32) 2-sulfurtransferase from Actinobacillus pleuropneumoniae serotype 3 (strain JL03).